A 172-amino-acid chain; its full sequence is Protein/nucleic acid deglycase 2 (172 aa).

Residues 3-171 form the PfpI endopeptidase domain; it reads KKIAVLITDE…FNREALRLLG (169 aa). Cys-104 (nucleophile) is an active-site residue.

This sequence belongs to the peptidase C56 family. In terms of assembly, exists in monomeric, trimeric, and hexameric forms.

The protein resides in the cytoplasm. The enzyme catalyses N(omega)-(1-hydroxy-2-oxopropyl)-L-arginyl-[protein] + H2O = lactate + L-arginyl-[protein] + H(+). It carries out the reaction N(6)-(1-hydroxy-2-oxopropyl)-L-lysyl-[protein] + H2O = lactate + L-lysyl-[protein] + H(+). The catalysed reaction is S-(1-hydroxy-2-oxopropyl)-L-cysteinyl-[protein] + H2O = lactate + L-cysteinyl-[protein] + H(+). It catalyses the reaction N(omega)-(1-hydroxy-2-oxoethyl)-L-arginyl-[protein] + H2O = L-arginyl-[protein] + glycolate + H(+). The enzyme catalyses N(6)-(1-hydroxy-2-oxoethyl)-L-lysyl-[protein] + H2O = glycolate + L-lysyl-[protein] + H(+). It carries out the reaction S-(1-hydroxy-2-oxoethyl)-L-cysteinyl-[protein] + H2O = glycolate + L-cysteinyl-[protein] + H(+). The catalysed reaction is N(2)-(1-hydroxy-2-oxopropyl)-dGTP + H2O = lactate + dGTP + H(+). It catalyses the reaction N(2)-(1-hydroxy-2-oxopropyl)-GTP + H2O = lactate + GTP + H(+). The enzyme catalyses N(2)-(1-hydroxy-2-oxopropyl)-GDP + H2O = lactate + GDP + H(+). It carries out the reaction N(2)-(1-hydroxy-2-oxopropyl)-GMP + H2O = lactate + GMP + H(+). The catalysed reaction is N(2)-(1-hydroxy-2-oxoethyl)-dGTP + H2O = dGTP + glycolate + H(+). It catalyses the reaction N(2)-(1-hydroxy-2-oxoethyl)-GTP + H2O = glycolate + GTP + H(+). The enzyme catalyses N(2)-(1-hydroxy-2-oxoethyl)-GDP + H2O = glycolate + GDP + H(+). It carries out the reaction N(2)-(1-hydroxy-2-oxoethyl)-GMP + H2O = glycolate + GMP + H(+). The catalysed reaction is an N(2)-(1-hydroxy-2-oxopropyl)-guanosine in RNA + H2O = a guanosine in RNA + lactate + H(+). It catalyses the reaction an N(2)-(1-hydroxy-2-oxopropyl)-2'-deoxyguanosine in DNA + H2O = a 2'-deoxyguanosine in DNA + lactate + H(+). The enzyme catalyses an N(2)-(1-hydroxy-2-oxoethyl)-guanosine in RNA + H2O = a guanosine in RNA + glycolate + H(+). It carries out the reaction an N(2)-(1-hydroxy-2-oxoethyl)-2'-deoxyguanosine in DNA + H2O = a 2'-deoxyguanosine in DNA + glycolate + H(+). With respect to regulation, glyoxalase activity is inhibited by zinc ions at pH 7.0. Functionally, protein and nucleotide deglycase that catalyzes the deglycation of the Maillard adducts formed between amino groups of proteins or nucleotides and reactive carbonyl groups of glyoxals. Thus, functions as a protein deglycase that repairs methylglyoxal- and glyoxal-glycated proteins, and releases repaired proteins and lactate or glycolate, respectively. Deglycates cysteine, arginine and lysine residues in proteins, and thus reactivates these proteins by reversing glycation by glyoxals. Is able to repair glycated serum albumin, collagen, glyceraldehyde-3-phosphate dehydrogenase, and fructose biphosphate aldolase. Acts on early glycation intermediates (hemithioacetals and aminocarbinols), preventing the formation of advanced glycation endproducts (AGE) that cause irreversible damage. Also functions as a nucleotide deglycase able to repair glycated guanine in the free nucleotide pool (GTP, GDP, GMP, dGTP) and in DNA and RNA. Is thus involved in a major nucleotide repair system named guanine glycation repair (GG repair), dedicated to reversing methylglyoxal and glyoxal damage via nucleotide sanitization and direct nucleic acid repair. In vitro, prevents acrylamide formation in asparagine/glyoxal and asparagine/sugar mixtures at 55 degrees Celsius, likely by degrading asparagine/glyoxal Maillard adducts formed at high temperatures. Also displays an apparent glyoxalase activity that in fact reflects its deglycase activity. Is a general stress protein; is required for the protection of bacterial cells against many environmental stresses, including oxidative, thermal, osmotic, UV, and pH stresses. And plays an important role in protection against electrophile/carbonyl stress. This chain is Protein/nucleic acid deglycase 2 (yhbO), found in Escherichia coli (strain K12).